The sequence spans 507 residues: Glucose-6-phosphate isomerase (507 aa).

The active-site Proton donor is E337. Catalysis depends on residues H368 and K478.

This sequence belongs to the GPI family.

The protein localises to the cytoplasm. The catalysed reaction is alpha-D-glucose 6-phosphate = beta-D-fructose 6-phosphate. It functions in the pathway carbohydrate biosynthesis; gluconeogenesis. The protein operates within carbohydrate degradation; glycolysis; D-glyceraldehyde 3-phosphate and glycerone phosphate from D-glucose: step 2/4. Its function is as follows. Catalyzes the reversible isomerization of glucose-6-phosphate to fructose-6-phosphate. This is Glucose-6-phosphate isomerase from Novosphingobium aromaticivorans (strain ATCC 700278 / DSM 12444 / CCUG 56034 / CIP 105152 / NBRC 16084 / F199).